The following is a 304-amino-acid chain: Non-specific ribonucleoside hydrolase RihC (304 aa).

Residue histidine 233 is part of the active site.

It belongs to the IUNH family. RihC subfamily.

Functionally, hydrolyzes both purine and pyrimidine ribonucleosides with a broad-substrate specificity. In Escherichia coli O157:H7, this protein is Non-specific ribonucleoside hydrolase RihC.